The sequence spans 68 residues: Riparin-1.5 amide (68 aa).

The N-terminal stretch at 1 to 15 (MKIIVVLAVLMLVSA) is a signal peptide. A propeptide spanning residues 16-41 (QVCLVSAAEMGHSSDNELSSRDLVKR) is cleaved from the precursor. A disulfide bond links Cys47 and Cys53. Cys53 carries the post-translational modification Cysteine amide. Residues 57–68 (SIESSEGANGGE) constitute a propeptide that is removed on maturation.

As to expression, expressed by the skin glands.

The protein localises to the secreted. The protein is Riparin-1.5 amide of Crinia riparia (Streambank froglet).